The following is a 505-amino-acid chain: Endoglucanase 5 (505 aa).

Positions 1-31 (MWMRRNQIVRKLTLGVVTTVLGMSLSFSALS) are cleaved as a signal peptide. Residues 32-334 (ATPVETHGQL…REQIRAGANL (303 aa)) form a catalytic region. Substrate-binding positions include His64, 68 to 69 (WF), Tyr95, and His130. The Proton donor role is filled by Glu168. Residue Tyr230 participates in substrate binding. The active-site Nucleophile is the Glu256. Residues 262–263 (AS), Trp290, and 295–297 (KSE) each bind substrate. Residues 332–355 (ANLGGGDTPTTPTEPTNPGNGTTG) are disordered. Positions 335–352 (GGGDTPTTPTEPTNPGNG) are linker. Residues 339 to 355 (TPTTPTEPTNPGNGTTG) are compositionally biased toward low complexity. A CBM3 domain is found at 353–505 (TTGDVVLQYR…KGTLVWGVEP (153 aa)).

The protein belongs to the glycosyl hydrolase 5 (cellulase A) family.

It localises to the secreted. It carries out the reaction Endohydrolysis of (1-&gt;4)-beta-D-glucosidic linkages in cellulose, lichenin and cereal beta-D-glucans.. Functionally, endoglucanase with some exoglucanase activity. This Pectobacterium carotovorum subsp. carotovorum (Erwinia carotovora subsp. carotovora) protein is Endoglucanase 5 (celV).